A 309-amino-acid chain; its full sequence is G-protein coupled receptor 35 (309 aa).

The Extracellular segment spans residues 1–24; it reads MNGTYNTCGSSDLTWPPAIKLGFY. An N-linked (GlcNAc...) asparagine glycan is attached at Asn-2. Residues 25–45 form a helical membrane-spanning segment; sequence AYLGVLLVLGLLLNSLALWVF. Over 46–56 the chain is Cytoplasmic; it reads CCRMQQWTETR. The chain crosses the membrane as a helical span at residues 57–77; that stretch reads IYMTNLAVADLCLLCTLPFVL. The Extracellular portion of the chain corresponds to 78–90; that stretch reads HSLRDTSDTPLCQ. Cys-89 and Cys-162 are joined by a disulfide. The helical transmembrane segment at 91–112 threads the bilayer; the sequence is LSQGIYLTNRYMSISLVTAIAV. At 113 to 135 the chain is on the cytoplasmic side; it reads DRYVAVRHPLRARGLRSPRQAAA. A helical membrane pass occupies residues 136–156; it reads VCAVLWVLVIGSLVARWLLGI. The Extracellular portion of the chain corresponds to 157 to 174; that stretch reads QEGGFCFRSTRHNFNSMA. A helical membrane pass occupies residues 175 to 195; it reads FPLLGFYLPLAVVVFCSLKVV. At 196-218 the chain is on the cytoplasmic side; the sequence is TALAQRPPTDVGQAEATRKAARM. A helical membrane pass occupies residues 219–239; the sequence is VWANLLVFVVCFLPLHVGLTV. Residues 240–258 are Extracellular-facing; the sequence is RLAVGWNACALLETIRRAL. Residues 259–279 form a helical membrane-spanning segment; sequence YITSKLSDANCCLDAICYYYM. At 280–309 the chain is on the cytoplasmic side; it reads AKEFQEASALAVAPSAKAHKSQDSLCVTLA. 2 positions are modified to phosphoserine: Ser-287 and Ser-294. 2 positions are modified to phosphoserine; by GRK5 and GRK6: Ser-300 and Ser-303. Thr-307 bears the Phosphothreonine mark.

Belongs to the G-protein coupled receptor 1 family. As to quaternary structure, interacts with GNA13. Interacts with ARRB2. Multiply phosphorylated in clusters of serines and threonines in the C-terminal tail. Phosphorylation of Ser-300 and Ser-303 is mediated by GRK5 and/or GRK6. As to expression, predominantly expressed in immune and gastrointestinal tissues.

Its subcellular location is the cell membrane. Its function is as follows. G-protein coupled receptor that binds to several ligands including the tryptophan metabolite kynurenic acid (KYNA), lysophosphatidic acid (LPA) or 5-hydroxyindoleacetic acid (5-HIAA) with high affinity, leading to rapid and transient activation of numerous intracellular signaling pathways. Plays a role in neutrophil recruitment to sites of inflammation and bacterial clearance through the major serotonin metabolite 5-HIAA that acts as a physiological ligand. Stimulates lipid metabolism, thermogenic, and anti-inflammatory gene expression in adipose tissue once activated by kynurenic acid. In macrophages, activation by lysophosphatidic acid promotes GPR35-induced signaling with a distinct transcriptional profile characterized by TNF production associated with ERK and NF-kappa-B activation. In turn, induces chemotaxis of macrophages. This is G-protein coupled receptor 35 (GPR35) from Homo sapiens (Human).